Here is a 412-residue protein sequence, read N- to C-terminus: Serine hydroxymethyltransferase (412 aa).

(6S)-5,6,7,8-tetrahydrofolate is bound by residues Leu-117 and 121–123; that span reads GHL. Lys-226 bears the N6-(pyridoxal phosphate)lysine mark. Residue 349–351 participates in (6S)-5,6,7,8-tetrahydrofolate binding; the sequence is SPF.

The protein belongs to the SHMT family. As to quaternary structure, homodimer. Pyridoxal 5'-phosphate serves as cofactor.

The protein resides in the cytoplasm. It carries out the reaction (6R)-5,10-methylene-5,6,7,8-tetrahydrofolate + glycine + H2O = (6S)-5,6,7,8-tetrahydrofolate + L-serine. Its pathway is one-carbon metabolism; tetrahydrofolate interconversion. The protein operates within amino-acid biosynthesis; glycine biosynthesis; glycine from L-serine: step 1/1. In terms of biological role, catalyzes the reversible interconversion of serine and glycine with tetrahydrofolate (THF) serving as the one-carbon carrier. This reaction serves as the major source of one-carbon groups required for the biosynthesis of purines, thymidylate, methionine, and other important biomolecules. Also exhibits THF-independent aldolase activity toward beta-hydroxyamino acids, producing glycine and aldehydes, via a retro-aldol mechanism. The polypeptide is Serine hydroxymethyltransferase (Halothermothrix orenii (strain H 168 / OCM 544 / DSM 9562)).